Reading from the N-terminus, the 464-residue chain is DNA primase DnaG (464 aa).

Residues 171–245 (DTIIIVEGRA…DIDYVARAPK (75 aa)) form the Toprim domain. 3 residues coordinate Mg(2+): Glu-177, Asp-219, and Asp-221.

This sequence belongs to the archaeal DnaG primase family. As to quaternary structure, forms a ternary complex with MCM helicase and DNA. The cofactor is Mg(2+).

It catalyses the reaction ssDNA + n NTP = ssDNA/pppN(pN)n-1 hybrid + (n-1) diphosphate.. Its function is as follows. RNA polymerase that catalyzes the synthesis of short RNA molecules used as primers for DNA polymerase during DNA replication. The chain is DNA primase DnaG from Methanococcus aeolicus (strain ATCC BAA-1280 / DSM 17508 / OCM 812 / Nankai-3).